Consider the following 349-residue polypeptide: Hydroxymethylglutaryl-CoA synthase (349 aa).

2 residues coordinate (3S)-3-hydroxy-3-methylglutaryl-CoA: aspartate 30 and alanine 31. Catalysis depends on glutamate 82, which acts as the Proton donor/acceptor. (3S)-3-hydroxy-3-methylglutaryl-CoA contacts are provided by cysteine 114 and threonine 155. Catalysis depends on cysteine 114, which acts as the Acyl-thioester intermediate. Arginine 203 lines the CoA pocket. Positions 205 and 238 each coordinate (3S)-3-hydroxy-3-methylglutaryl-CoA. Histidine 238 serves as the catalytic Proton donor/acceptor. Residue lysine 243 participates in CoA binding. Residues asparagine 270 and serine 300 each contribute to the (3S)-3-hydroxy-3-methylglutaryl-CoA site.

Belongs to the thiolase-like superfamily. Archaeal HMG-CoA synthase family. In terms of assembly, interacts with acetoacetyl-CoA thiolase that catalyzes the precedent step in the pathway and with a DUF35 protein. The acetoacetyl-CoA thiolase/HMG-CoA synthase complex channels the intermediate via a fused CoA-binding site, which allows for efficient coupling of the endergonic thiolase reaction with the exergonic HMGCS reaction.

The enzyme catalyses acetoacetyl-CoA + acetyl-CoA + H2O = (3S)-3-hydroxy-3-methylglutaryl-CoA + CoA + H(+). It functions in the pathway metabolic intermediate biosynthesis; (R)-mevalonate biosynthesis; (R)-mevalonate from acetyl-CoA: step 2/3. Its function is as follows. Catalyzes the condensation of acetyl-CoA with acetoacetyl-CoA to form 3-hydroxy-3-methylglutaryl-CoA (HMG-CoA). Functions in the mevalonate (MVA) pathway leading to isopentenyl diphosphate (IPP), a key precursor for the biosynthesis of isoprenoid compounds that are building blocks of archaeal membrane lipids. The protein is Hydroxymethylglutaryl-CoA synthase of Methanococcus maripaludis (strain DSM 14266 / JCM 13030 / NBRC 101832 / S2 / LL).